The chain runs to 110 residues: SOSS complex subunit C (110 aa).

This sequence belongs to the SOSS-C family. Belongs to the multiprotein complex Integrator. Component of the SOSS complex, composed of soss-b (soss-b1/nabp2 or soss-b2/nabp1), soss-a/ints3 and soss-c/inip.

The protein localises to the nucleus. In terms of biological role, component of the SOSS complex, a multiprotein complex that functions downstream of the MRN complex to promote DNA repair and G2/M checkpoint. The SOSS complex associates with single-stranded DNA at DNA lesions and influences diverse endpoints in the cellular DNA damage response including cell-cycle checkpoint activation, recombinational repair and maintenance of genomic stability. Required for efficient homologous recombination-dependent repair of double-strand breaks (DSBs). In Xenopus laevis (African clawed frog), this protein is SOSS complex subunit C (inip).